We begin with the raw amino-acid sequence, 449 residues long: Procollagen C-endopeptidase enhancer 1 (449 aa).

Positions 1-25 (MLPAATASLLGPLLTACALLPFAQG) are cleaved as a signal peptide. An N-linked (GlcNAc...) asparagine glycan is attached at asparagine 29. Cystine bridges form between cysteine 37-cysteine 63, cysteine 90-cysteine 112, cysteine 159-cysteine 186, cysteine 213-cysteine 236, cysteine 318-cysteine 386, cysteine 322-cysteine 389, and cysteine 333-cysteine 437. 2 CUB domains span residues 37–149 (CGGD…YSGR) and 159–273 (CGGR…YKTL). Serine 50 bears the Phosphoserine mark. The tract at residues 271–321 (KTLPRGTAKEGQGPGPKRGTEPKVKLPPKSQPPEKTEESPSAPDAPTCPKQ) is disordered. Residues 318 to 437 (CPKQCRRTGT…ILTNLSKRKC (120 aa)) enclose the NTR domain. Asparagine 431 carries an N-linked (GlcNAc...) asparagine glycan.

Interacts with EFEMP2. C-terminally processed at multiple positions.

The protein localises to the secreted. In terms of biological role, binds to the C-terminal propeptide of type I procollagen and enhances procollagen C-proteinase activity. Its function is as follows. C-terminal processed part of PCPE (CT-PCPE) may have an metalloproteinase inhibitory activity. The protein is Procollagen C-endopeptidase enhancer 1 (PCOLCE) of Homo sapiens (Human).